The primary structure comprises 250 residues: Ribosomal large subunit pseudouridine synthase B (250 aa).

The 71-residue stretch at 3–73 (EKIQKILSHL…FKTKIIIYNK (71 aa)) folds into the S4 RNA-binding domain. Catalysis depends on D109, which acts as the Nucleophile.

This sequence belongs to the pseudouridine synthase RsuA family.

It carries out the reaction uridine(2605) in 23S rRNA = pseudouridine(2605) in 23S rRNA. Its function is as follows. Responsible for synthesis of pseudouridine from uracil-2605 in 23S ribosomal RNA. The polypeptide is Ribosomal large subunit pseudouridine synthase B (rluB) (Buchnera aphidicola subsp. Acyrthosiphon pisum (strain APS) (Acyrthosiphon pisum symbiotic bacterium)).